Reading from the N-terminus, the 279-residue chain is 5'-nucleotidase SurE (279 aa).

D28, D29, S59, and N113 together coordinate a divalent metal cation.

The protein belongs to the SurE nucleotidase family. The cofactor is a divalent metal cation.

It is found in the cytoplasm. The enzyme catalyses a ribonucleoside 5'-phosphate + H2O = a ribonucleoside + phosphate. In terms of biological role, nucleotidase that shows phosphatase activity on nucleoside 5'-monophosphates. This Methanospirillum hungatei JF-1 (strain ATCC 27890 / DSM 864 / NBRC 100397 / JF-1) protein is 5'-nucleotidase SurE.